Consider the following 626-residue polypeptide: tRNA uridine 5-carboxymethylaminomethyl modification enzyme MnmG (626 aa).

Residue 13–18 coordinates FAD; sequence GGGHAG. 273–287 contacts NAD(+); it reads GPRYCPSIEDKIHRF.

The protein belongs to the MnmG family. In terms of assembly, homodimer. Heterotetramer of two MnmE and two MnmG subunits. FAD is required as a cofactor.

It is found in the cytoplasm. NAD-binding protein involved in the addition of a carboxymethylaminomethyl (cmnm) group at the wobble position (U34) of certain tRNAs, forming tRNA-cmnm(5)s(2)U34. The polypeptide is tRNA uridine 5-carboxymethylaminomethyl modification enzyme MnmG (Acinetobacter baumannii (strain ACICU)).